The following is a 114-amino-acid chain: Phosphoribosyl-AMP cyclohydrolase (114 aa).

Residue D76 participates in Mg(2+) binding. C77 is a binding site for Zn(2+). Positions 78 and 80 each coordinate Mg(2+). Zn(2+) contacts are provided by C93 and C100.

This sequence belongs to the PRA-CH family. As to quaternary structure, homodimer. The cofactor is Mg(2+). It depends on Zn(2+) as a cofactor.

It is found in the cytoplasm. The catalysed reaction is 1-(5-phospho-beta-D-ribosyl)-5'-AMP + H2O = 1-(5-phospho-beta-D-ribosyl)-5-[(5-phospho-beta-D-ribosylamino)methylideneamino]imidazole-4-carboxamide. It functions in the pathway amino-acid biosynthesis; L-histidine biosynthesis; L-histidine from 5-phospho-alpha-D-ribose 1-diphosphate: step 3/9. In terms of biological role, catalyzes the hydrolysis of the adenine ring of phosphoribosyl-AMP. The sequence is that of Phosphoribosyl-AMP cyclohydrolase from Streptococcus gordonii (strain Challis / ATCC 35105 / BCRC 15272 / CH1 / DL1 / V288).